Consider the following 143-residue polypeptide: 6,7-dimethyl-8-ribityllumazine synthase (143 aa).

5-amino-6-(D-ribitylamino)uracil contacts are provided by residues Trp-10, 44 to 46 (SFE), and 68 to 70 (CVI). 73 to 74 (DT) provides a ligand contact to (2S)-2-hydroxy-3-oxobutyl phosphate. The active-site Proton donor is the His-76. Tyr-101 is a 5-amino-6-(D-ribitylamino)uracil binding site. Arg-115 contributes to the (2S)-2-hydroxy-3-oxobutyl phosphate binding site.

The protein belongs to the DMRL synthase family.

It catalyses the reaction (2S)-2-hydroxy-3-oxobutyl phosphate + 5-amino-6-(D-ribitylamino)uracil = 6,7-dimethyl-8-(1-D-ribityl)lumazine + phosphate + 2 H2O + H(+). The protein operates within cofactor biosynthesis; riboflavin biosynthesis; riboflavin from 2-hydroxy-3-oxobutyl phosphate and 5-amino-6-(D-ribitylamino)uracil: step 1/2. Functionally, catalyzes the formation of 6,7-dimethyl-8-ribityllumazine by condensation of 5-amino-6-(D-ribitylamino)uracil with 3,4-dihydroxy-2-butanone 4-phosphate. This is the penultimate step in the biosynthesis of riboflavin. This chain is 6,7-dimethyl-8-ribityllumazine synthase, found in Bacteroides fragilis (strain YCH46).